The sequence spans 376 residues: C-type lectin domain family 4 member M (376 aa).

Residues 1–49 (MSDSKEPRVQQLGLLEEDPTTSGIRLFPRDFQFQQIHGHKSSTGCLGHG) are Cytoplasmic-facing. Positions 14–15 (LL) match the Endocytosis signal motif. Residues 50-70 (ALVLQLLSFTLLAGVLVAILV) traverse the membrane as a helical; Signal-anchor for type II membrane protein segment. At 71–376 (QVSKVPSSLS…KKPTVCFRDE (306 aa)) the chain is on the extracellular side. Asn-92 is a glycosylation site (N-linked (GlcNAc...) asparagine). Tandem repeats lie at residues 108-130 (KLQE…PEKS), 131-153 (KLQE…PEKS), 154-176 (KLQE…PEKS), 177-199 (KLQE…PEKS), 200-222 (KLQE…PDQS), and 223-245 (KQQQ…CRHC). A 6 X approximate tandem repeats region spans residues 108–246 (KLQEIYQELT…AFERLCRHCP (139 aa)). Intrachain disulfides connect Cys-242–Cys-372, Cys-245–Cys-256, Cys-273–Cys-366, and Cys-345–Cys-358. The 117-residue stretch at 251–367 (FFQGNCYFMS…CDVDNYWICK (117 aa)) folds into the C-type lectin domain. Residues Glu-336, Asn-338, Ser-340, Glu-343, Asn-354, and Asp-355 each coordinate Ca(2+). An N-linked (GlcNAc...) asparagine glycan is attached at Asn-338.

In terms of assembly, homotetramer.

Its subcellular location is the membrane. In terms of biological role, probable pathogen-recognition receptor involved in peripheral immune surveillance in liver. May mediate the endocytosis of pathogens which are subsequently degraded in lysosomal compartments. Probably recognizes in a calcium-dependent manner high mannose N-linked oligosaccharides in a variety of pathogen antigens. Is a receptor for ICAM3, probably by binding to mannose-like carbohydrates. In Gorilla gorilla gorilla (Western lowland gorilla), this protein is C-type lectin domain family 4 member M (CLEC4M).